Consider the following 430-residue polypeptide: NADH-quinone oxidoreductase subunit D 1 (430 aa).

A disordered region spans residues 1-36 (MSEAKGVGGIDPRATPGSAGAGERPPMGTVSRAGDG).

Belongs to the complex I 49 kDa subunit family. NDH-1 is composed of 14 different subunits. Subunits NuoB, C, D, E, F, and G constitute the peripheral sector of the complex.

It is found in the cell inner membrane. It carries out the reaction a quinone + NADH + 5 H(+)(in) = a quinol + NAD(+) + 4 H(+)(out). Functionally, NDH-1 shuttles electrons from NADH, via FMN and iron-sulfur (Fe-S) centers, to quinones in the respiratory chain. The immediate electron acceptor for the enzyme in this species is believed to be ubiquinone. Couples the redox reaction to proton translocation (for every two electrons transferred, four hydrogen ions are translocated across the cytoplasmic membrane), and thus conserves the redox energy in a proton gradient. In Anaeromyxobacter dehalogenans (strain 2CP-C), this protein is NADH-quinone oxidoreductase subunit D 1.